Consider the following 74-residue polypeptide: Large ribosomal subunit protein bL31 (74 aa).

The protein belongs to the bacterial ribosomal protein bL31 family. Type A subfamily. In terms of assembly, part of the 50S ribosomal subunit.

Its function is as follows. Binds the 23S rRNA. In Xanthobacter autotrophicus (strain ATCC BAA-1158 / Py2), this protein is Large ribosomal subunit protein bL31.